Here is an 85-residue protein sequence, read N- to C-terminus: Large ribosomal subunit protein bL27 (85 aa).

The interval 1-22 is disordered; that stretch reads MAHKKGASSTRNGRDSNAQRLG. Residues 7 to 19 show a composition bias toward polar residues; the sequence is ASSTRNGRDSNAQ.

This sequence belongs to the bacterial ribosomal protein bL27 family.

This chain is Large ribosomal subunit protein bL27, found in Leifsonia xyli subsp. xyli (strain CTCB07).